A 238-amino-acid chain; its full sequence is Cysteine-rich venom protein pseudechetoxin-like (238 aa).

The first 19 residues, 1–19, serve as a signal peptide directing secretion; it reads MIAFIVLLSLAAVLQQSSG. Residues 20-28 constitute a propeptide that is removed on maturation; the sequence is TVDFASESS. Residues 38-164 form the SCP domain; that stretch reads VDKHNDLRRS…STKYLYVCQY (127 aa). 8 disulfide bridges follow: Cys-75-Cys-153, Cys-92-Cys-165, Cys-148-Cys-162, Cys-184-Cys-191, Cys-187-Cys-196, Cys-200-Cys-233, Cys-209-Cys-227, and Cys-218-Cys-231. The 34-residue stretch at 200–233 folds into the ShKT domain; it reads CKHNDDLSNCKPLAKKSKCQTEWIKSKCPATCFC.

Belongs to the CRISP family. In terms of tissue distribution, expressed by the venom gland.

It is found in the secreted. Its function is as follows. Blocks olfactory (CNGA2) and retinal (CNGA1) CNG channel currents. Does not affect neither depolarization- nor caffeine-induced contraction of smooth muscle. This is Cysteine-rich venom protein pseudechetoxin-like from Oxyuranus microlepidotus (Inland taipan).